The sequence spans 335 residues: COP9 signalosome complex subunit 5 (335 aa).

The MPN domain occupies valine 51 to aspartate 187. The Zn(2+) site is built by histidine 134, histidine 136, and aspartate 147. The JAMM motif motif lies at histidine 134–aspartate 147.

This sequence belongs to the peptidase M67A family. CSN5 subfamily. As to quaternary structure, component of the COP9 signalosome (CSN) complex.

The protein resides in the cytoplasm. It localises to the nucleus. Functionally, catalytic component of the COP9 signalosome (CSN) complex that acts as an regulator of the ubiquitin (Ubl) conjugation pathway by mediating the deneddylation of the cullin subunit of SCF-type E3 ubiquitin-protein ligase complexes. The CSN complex seems to link protein degradation to sexual development. Required for fruit body formation. The protein is COP9 signalosome complex subunit 5 (rri1) of Emericella nidulans (strain FGSC A4 / ATCC 38163 / CBS 112.46 / NRRL 194 / M139) (Aspergillus nidulans).